Consider the following 169-residue polypeptide: Large ribosomal subunit protein uL10 (169 aa).

The protein belongs to the universal ribosomal protein uL10 family. Part of the ribosomal stalk of the 50S ribosomal subunit. The N-terminus interacts with L11 and the large rRNA to form the base of the stalk. The C-terminus forms an elongated spine to which L12 dimers bind in a sequential fashion forming a multimeric L10(L12)X complex.

Its function is as follows. Forms part of the ribosomal stalk, playing a central role in the interaction of the ribosome with GTP-bound translation factors. This chain is Large ribosomal subunit protein uL10, found in Orientia tsutsugamushi (strain Boryong) (Rickettsia tsutsugamushi).